The sequence spans 444 residues: RAC family serine/threonine-protein kinase homolog (444 aa).

In terms of domain architecture, PH spans 5–100 (PIKHEGFLTK…WIEILINERE (96 aa)). In terms of domain architecture, Protein kinase spans 120 to 374 (FELLNLVGKG…PNLIKRHPFF (255 aa)). Residues 126 to 134 (VGKGSFGKV) and Lys149 contribute to the ATP site. Asp243 functions as the Proton acceptor in the catalytic mechanism. Residue Thr278 is modified to Phosphothreonine. The AGC-kinase C-terminal domain occupies 375–444 (RSIDWEQLFQ…TYVAESEHLR (70 aa)).

Belongs to the protein kinase superfamily. AGC Ser/Thr protein kinase family. RAC subfamily.

It carries out the reaction L-seryl-[protein] + ATP = O-phospho-L-seryl-[protein] + ADP + H(+). The enzyme catalyses L-threonyl-[protein] + ATP = O-phospho-L-threonyl-[protein] + ADP + H(+). Functionally, predominantly involved during the aggregation to control cell polarity and chemotaxis. Phosphorylates talB, gefN, gefS, PI4P 5-kinase and gacQ. This is RAC family serine/threonine-protein kinase homolog (pkbA) from Dictyostelium discoideum (Social amoeba).